The primary structure comprises 233 residues: MKLFDYAPLSLAWREFLQSEFKKPYFLEIEKRYLEALKSPKTIFPKSSNLFYALNLTPPSAVKIILLGQDPYHSTYLENEQELPVAMGLSFSVEKNAPIPPSLKNIFKELHANLGVPVPCCGDLSAWAKRGMLLLNAILSVEKNQAASHQYIGWEAFSDQILMRLFKTTAPLIVVLLGKVAQKKIALIPKNKHIIITAPHPSPLSRGFLGSGVFSSVQKAYREVYRKDFDFSL.

D70 (proton acceptor) is an active-site residue.

This sequence belongs to the uracil-DNA glycosylase (UDG) superfamily. UNG family.

The protein resides in the cytoplasm. The enzyme catalyses Hydrolyzes single-stranded DNA or mismatched double-stranded DNA and polynucleotides, releasing free uracil.. Its function is as follows. Excises uracil residues from the DNA which can arise as a result of misincorporation of dUMP residues by DNA polymerase or due to deamination of cytosine. This Helicobacter pylori (strain G27) protein is Uracil-DNA glycosylase.